Here is a 62-residue protein sequence, read N- to C-terminus: Photosystem II reaction center protein Z (62 aa).

2 consecutive transmembrane segments (helical) span residues 8-28 (AVFA…VVFA) and 41-61 (FSGT…NSLI).

It belongs to the PsbZ family. In terms of assembly, PSII is composed of 1 copy each of membrane proteins PsbA, PsbB, PsbC, PsbD, PsbE, PsbF, PsbH, PsbI, PsbJ, PsbK, PsbL, PsbM, PsbT, PsbY, PsbZ, Psb30/Ycf12, at least 3 peripheral proteins of the oxygen-evolving complex and a large number of cofactors. It forms dimeric complexes.

The protein localises to the plastid. It localises to the chloroplast thylakoid membrane. Functionally, may control the interaction of photosystem II (PSII) cores with the light-harvesting antenna, regulates electron flow through the 2 photosystem reaction centers. PSII is a light-driven water plastoquinone oxidoreductase, using light energy to abstract electrons from H(2)O, generating a proton gradient subsequently used for ATP formation. This Liriodendron tulipifera (Tuliptree) protein is Photosystem II reaction center protein Z.